The following is an 824-amino-acid chain: Acyl-homoserine lactone acylase QuiP (824 aa).

The N-terminal stretch at 1-26 (MASPALRHFLPRFGAAAAAASFLSLA) is a signal peptide. Ser264 acts as the Nucleophile in catalysis.

The protein belongs to the peptidase S45 family. As to quaternary structure, heterodimer of an alpha subunit and a beta subunit processed from the same precursor.

Its subcellular location is the periplasm. The catalysed reaction is an N-acyl-L-homoserine lactone + H2O = L-homoserine lactone + a carboxylate. In terms of biological role, catalyzes the deacylation of acyl-homoserine lactone (AHL or acyl-HSL), releasing homoserine lactone (HSL) and the corresponding fatty acid. Possesses a specificity for the degradation of long-chain acyl-HSLs (side chains of seven or more carbons in length). This chain is Acyl-homoserine lactone acylase QuiP (quiP), found in Pseudomonas syringae pv. syringae (strain B728a).